A 678-amino-acid polypeptide reads, in one-letter code: Mitogen-activated protein kinase kinase kinase 7 (678 aa).

Residues 19 to 271 (ITLREKVGHG…YIVGVMHEIV (253 aa)) enclose the Protein kinase domain. Residues 25–33 (VGHGSYGVV) and lysine 46 contribute to the ATP site. Aspartate 140 acts as the Proton acceptor in catalysis. Disordered stretches follow at residues 296-322 (DGTV…QLTP), 339-365 (TTSS…LDNN), 431-455 (DLSP…LTVT), and 616-647 (QLAA…HFLQ). Low complexity-rich tracts occupy residues 313 to 322 (LSPSSTQLTP) and 339 to 352 (TTSS…STSS). Residues 353-364 (DITPTNSGQLDN) show a composition bias toward polar residues.

This sequence belongs to the protein kinase superfamily. STE Ser/Thr protein kinase family. MAP kinase kinase kinase subfamily. Mg(2+) serves as cofactor.

The catalysed reaction is L-seryl-[protein] + ATP = O-phospho-L-seryl-[protein] + ADP + H(+). It catalyses the reaction L-threonyl-[protein] + ATP = O-phospho-L-threonyl-[protein] + ADP + H(+). Its function is as follows. Component of a protein kinase signal transduction cascade. Mediator of TGF-beta signal transduction. Responsible for activation of the JNK MAPK pathway (basket, bsk and hemipterous, hep) in response to LPS. Component of the NF-kappa-B pathway; relish-mediated JNK inhibition involves proteasomal degradation of Tak1; certain targets of Relish that are induced during immune responses may facilitate destruction of Tak1 and switch off the JNK cascade. Participates in diverse roles such as control of cell shape and regulation of apoptosis. This chain is Mitogen-activated protein kinase kinase kinase 7 (Tak1), found in Drosophila melanogaster (Fruit fly).